Consider the following 749-residue polypeptide: Chaperone protein DnaK 1 (749 aa).

Thr-198 bears the Phosphothreonine; by autocatalysis mark. 3 stretches are compositionally biased toward basic and acidic residues: residues 643–653 (RWDADPWDRSR), 661–694 (YDDR…RDRN), and 711–724 (PTWE…RDRS). Residues 643-749 (RWDADPWDRS…GWDDDDDEWF (107 aa)) form a disordered region. Acidic residues predominate over residues 740 to 749 (GWDDDDDEWF).

This sequence belongs to the heat shock protein 70 family.

In terms of biological role, acts as a chaperone. This is Chaperone protein DnaK 1 from Synechococcus sp. (strain ATCC 27144 / PCC 6301 / SAUG 1402/1) (Anacystis nidulans).